Consider the following 84-residue polypeptide: ATP synthase subunit c (84 aa).

The next 2 helical transmembrane spans lie at 9 to 29 and 57 to 77; these read LGLA…GCGI and ILGL…NLII.

Belongs to the ATPase C chain family. As to quaternary structure, F-type ATPases have 2 components, F(1) - the catalytic core - and F(0) - the membrane proton channel. F(1) has five subunits: alpha(3), beta(3), gamma(1), delta(1), epsilon(1). F(0) has three main subunits: a(1), b(2) and c(10-14). The alpha and beta chains form an alternating ring which encloses part of the gamma chain. F(1) is attached to F(0) by a central stalk formed by the gamma and epsilon chains, while a peripheral stalk is formed by the delta and b chains.

It is found in the cell membrane. Its function is as follows. F(1)F(0) ATP synthase produces ATP from ADP in the presence of a proton or sodium gradient. F-type ATPases consist of two structural domains, F(1) containing the extramembraneous catalytic core and F(0) containing the membrane proton channel, linked together by a central stalk and a peripheral stalk. During catalysis, ATP synthesis in the catalytic domain of F(1) is coupled via a rotary mechanism of the central stalk subunits to proton translocation. In terms of biological role, key component of the F(0) channel; it plays a direct role in translocation across the membrane. A homomeric c-ring of between 10-14 subunits forms the central stalk rotor element with the F(1) delta and epsilon subunits. The polypeptide is ATP synthase subunit c (Lawsonia intracellularis (strain PHE/MN1-00)).